Reading from the N-terminus, the 389-residue chain is 26S proteasome non-ATPase regulatory subunit 6 (389 aa).

The PCI domain maps to Asp193–Ser361.

It belongs to the proteasome subunit S10 family. As to quaternary structure, component of the 19S proteasome regulatory particle complex. The 26S proteasome consists of a 20S core particle (CP) and two 19S regulatory subunits (RP). The regulatory particle is made of a lid composed of 9 subunits including PSMD6, a base containing 6 ATPases and few additional components.

Functionally, component of the 26S proteasome, a multiprotein complex involved in the ATP-dependent degradation of ubiquitinated proteins. This complex plays a key role in the maintenance of protein homeostasis by removing misfolded or damaged proteins, which could impair cellular functions, and by removing proteins whose functions are no longer required. Therefore, the proteasome participates in numerous cellular processes, including cell cycle progression, apoptosis, or DNA damage repair. This Bos taurus (Bovine) protein is 26S proteasome non-ATPase regulatory subunit 6 (PSMD6).